A 310-amino-acid polypeptide reads, in one-letter code: Lipoyl synthase (310 aa).

[4Fe-4S] cluster is bound by residues cysteine 45, cysteine 50, cysteine 56, cysteine 71, cysteine 75, cysteine 78, and serine 285. The Radical SAM core domain occupies 57–274; that stretch reads WTKKHATVMI…GSIARAKGFL (218 aa).

This sequence belongs to the radical SAM superfamily. Lipoyl synthase family. [4Fe-4S] cluster serves as cofactor.

The protein resides in the cytoplasm. The catalysed reaction is [[Fe-S] cluster scaffold protein carrying a second [4Fe-4S](2+) cluster] + N(6)-octanoyl-L-lysyl-[protein] + 2 oxidized [2Fe-2S]-[ferredoxin] + 2 S-adenosyl-L-methionine + 4 H(+) = [[Fe-S] cluster scaffold protein] + N(6)-[(R)-dihydrolipoyl]-L-lysyl-[protein] + 4 Fe(3+) + 2 hydrogen sulfide + 2 5'-deoxyadenosine + 2 L-methionine + 2 reduced [2Fe-2S]-[ferredoxin]. Its pathway is protein modification; protein lipoylation via endogenous pathway; protein N(6)-(lipoyl)lysine from octanoyl-[acyl-carrier-protein]: step 2/2. In terms of biological role, catalyzes the radical-mediated insertion of two sulfur atoms into the C-6 and C-8 positions of the octanoyl moiety bound to the lipoyl domains of lipoate-dependent enzymes, thereby converting the octanoylated domains into lipoylated derivatives. In Novosphingobium aromaticivorans (strain ATCC 700278 / DSM 12444 / CCUG 56034 / CIP 105152 / NBRC 16084 / F199), this protein is Lipoyl synthase.